We begin with the raw amino-acid sequence, 275 residues long: 4-diphosphocytidyl-2-C-methyl-D-erythritol kinase (275 aa).

The active site involves lysine 8. Residue 86 to 96 participates in ATP binding; sequence PEGAGLGGGSS. Aspartate 125 is a catalytic residue.

It belongs to the GHMP kinase family. IspE subfamily.

The catalysed reaction is 4-CDP-2-C-methyl-D-erythritol + ATP = 4-CDP-2-C-methyl-D-erythritol 2-phosphate + ADP + H(+). It participates in isoprenoid biosynthesis; isopentenyl diphosphate biosynthesis via DXP pathway; isopentenyl diphosphate from 1-deoxy-D-xylulose 5-phosphate: step 3/6. Its function is as follows. Catalyzes the phosphorylation of the position 2 hydroxy group of 4-diphosphocytidyl-2C-methyl-D-erythritol. In Thermus thermophilus (strain ATCC BAA-163 / DSM 7039 / HB27), this protein is 4-diphosphocytidyl-2-C-methyl-D-erythritol kinase.